A 464-amino-acid chain; its full sequence is UDP-N-acetylmuramate--L-alanine ligase (464 aa).

115 to 121 (GSHGKTT) lines the ATP pocket.

It belongs to the MurCDEF family.

It is found in the cytoplasm. It catalyses the reaction UDP-N-acetyl-alpha-D-muramate + L-alanine + ATP = UDP-N-acetyl-alpha-D-muramoyl-L-alanine + ADP + phosphate + H(+). It functions in the pathway cell wall biogenesis; peptidoglycan biosynthesis. In terms of biological role, cell wall formation. In Pelagibacter ubique (strain HTCC1062), this protein is UDP-N-acetylmuramate--L-alanine ligase.